The primary structure comprises 492 residues: V-type proton ATPase subunit B 2 (492 aa).

The protein belongs to the ATPase alpha/beta chains family. In terms of assembly, V-ATPase is a heteromultimeric enzyme composed of a peripheral catalytic V1 complex (main components: subunits A, B, C, D, E, and F) attached to an integral membrane V0 proton pore complex (main component: the proteolipid protein).

Functionally, non-catalytic subunit of the peripheral V1 complex of vacuolar ATPase. V-ATPase is responsible for acidifying a variety of intracellular compartments in eukaryotic cells. The polypeptide is V-type proton ATPase subunit B 2 (Acetabularia acetabulum (Mermaid's wine glass)).